The following is a 467-amino-acid chain: MKHIVKHIHFVGIGGVGMSGIAEVLVNLGYQVSGSDLTSNAITDRLAALGARIAIGHAAENIEGANAVVVSTAVRSDNPEVLAARHRRIPIVPRAVMLAELMRLKQGIAIAGTHGKTTTTSLVASVLAAGGLDPTFVIGGRLISAGANARLGTGDFIVAEADESDASFLNLFPVIEVITNIDADHMDTYGHDFARLKQAFIEFTHRLPFYGIAVLCVDDPNVKEILPFVSKPIIRYGFAPDAQVRAVNVQARDGKMHFTAMREDAAPLDIVLNLPGEHNVQNALAAIAIATELEVKDADIQRALADFNGVGRRFQRYGEVPVFSEGSTNGAYTLVDDYGHHPVEMAATVAAARGAFPGRRLVLAFQPHRFTRTRDCFEDFVKVLSTVDALVLTEVYSAGESPIVAADGRALARALRVAGKVEPVFVDTVDEVPDALSAIVRDGDVVITMGAGSIGGVPARLAQETKV.

112–118 (GTHGKTT) is an ATP binding site.

The protein belongs to the MurCDEF family.

The protein resides in the cytoplasm. It catalyses the reaction UDP-N-acetyl-alpha-D-muramate + L-alanine + ATP = UDP-N-acetyl-alpha-D-muramoyl-L-alanine + ADP + phosphate + H(+). Its pathway is cell wall biogenesis; peptidoglycan biosynthesis. In terms of biological role, cell wall formation. The protein is UDP-N-acetylmuramate--L-alanine ligase of Paraburkholderia xenovorans (strain LB400).